Consider the following 384-residue polypeptide: 4-coumarate--CoA ligase (384 aa).

The protein belongs to the ATP-dependent AMP-binding enzyme family.

The catalysed reaction is (E)-4-coumarate + ATP + CoA = (E)-4-coumaroyl-CoA + AMP + diphosphate. Converts p-coumaric acid into p-coumaryl CoA. This is necessary for the activation of the photoactive yellow protein (PYP) chromophore. The protein is 4-coumarate--CoA ligase (pcl) of Rhodobacter capsulatus (strain ATCC BAA-309 / NBRC 16581 / SB1003).